The following is a 226-amino-acid chain: Octanoyltransferase (226 aa).

A BPL/LPL catalytic domain is found at G37–E220. Residues R76–H83, A151–G153, and G164–S166 each bind substrate. The Acyl-thioester intermediate role is filled by C182.

This sequence belongs to the LipB family.

Its subcellular location is the cytoplasm. It catalyses the reaction octanoyl-[ACP] + L-lysyl-[protein] = N(6)-octanoyl-L-lysyl-[protein] + holo-[ACP] + H(+). The protein operates within protein modification; protein lipoylation via endogenous pathway; protein N(6)-(lipoyl)lysine from octanoyl-[acyl-carrier-protein]: step 1/2. In terms of biological role, catalyzes the transfer of endogenously produced octanoic acid from octanoyl-acyl-carrier-protein onto the lipoyl domains of lipoate-dependent enzymes. Lipoyl-ACP can also act as a substrate although octanoyl-ACP is likely to be the physiological substrate. This chain is Octanoyltransferase, found in Caulobacter vibrioides (strain ATCC 19089 / CIP 103742 / CB 15) (Caulobacter crescentus).